The chain runs to 100 residues: NADH-quinone oxidoreductase subunit K 2 (100 aa).

Helical transmembrane passes span 2–22 (LAIE…TIGV), 29–49 (IVIF…FIAF), and 61–81 (FVFF…ALMI).

Belongs to the complex I subunit 4L family. In terms of assembly, NDH-1 is composed of 14 different subunits. Subunits NuoA, H, J, K, L, M, N constitute the membrane sector of the complex.

It localises to the cell inner membrane. The enzyme catalyses a quinone + NADH + 5 H(+)(in) = a quinol + NAD(+) + 4 H(+)(out). Functionally, NDH-1 shuttles electrons from NADH, via FMN and iron-sulfur (Fe-S) centers, to quinones in the respiratory chain. The immediate electron acceptor for the enzyme in this species is believed to be ubiquinone. Couples the redox reaction to proton translocation (for every two electrons transferred, four hydrogen ions are translocated across the cytoplasmic membrane), and thus conserves the redox energy in a proton gradient. The polypeptide is NADH-quinone oxidoreductase subunit K 2 (Citrifermentans bemidjiense (strain ATCC BAA-1014 / DSM 16622 / JCM 12645 / Bem) (Geobacter bemidjiensis)).